The following is a 158-amino-acid chain: Transcription elongation factor GreA (158 aa).

It belongs to the GreA/GreB family.

In terms of biological role, necessary for efficient RNA polymerase transcription elongation past template-encoded arresting sites. The arresting sites in DNA have the property of trapping a certain fraction of elongating RNA polymerases that pass through, resulting in locked ternary complexes. Cleavage of the nascent transcript by cleavage factors such as GreA or GreB allows the resumption of elongation from the new 3'terminus. GreA releases sequences of 2 to 3 nucleotides. The sequence is that of Transcription elongation factor GreA from Methylobacterium nodulans (strain LMG 21967 / CNCM I-2342 / ORS 2060).